The primary structure comprises 245 residues: tRNA pseudouridine synthase A (245 aa).

Residue Asp-52 is the Nucleophile of the active site. A substrate-binding site is contributed by Tyr-111.

Belongs to the tRNA pseudouridine synthase TruA family. As to quaternary structure, homodimer.

It carries out the reaction uridine(38/39/40) in tRNA = pseudouridine(38/39/40) in tRNA. In terms of biological role, formation of pseudouridine at positions 38, 39 and 40 in the anticodon stem and loop of transfer RNAs. This is tRNA pseudouridine synthase A from Rhodopseudomonas palustris (strain HaA2).